The following is a 296-amino-acid chain: GTPase Era (296 aa).

The 168-residue stretch at 3 to 170 (KSGFVTIVGR…KELMFKYIPE (168 aa)) folds into the Era-type G domain. Residues 11-18 (GRPNVGKS) are G1. 11–18 (GRPNVGKS) provides a ligand contact to GTP. Positions 37-41 (QTTRN) are G2. Residues 58 to 61 (DTPG) are G3. Residues 58-62 (DTPGI) and 120-123 (NKID) contribute to the GTP site. Residues 120 to 123 (NKID) are G4. Positions 149-151 (ISA) are G5. The 78-residue stretch at 201-278 (LSEEVPHGIA…YIRLWVKVKE (78 aa)) folds into the KH type-2 domain.

Belongs to the TRAFAC class TrmE-Era-EngA-EngB-Septin-like GTPase superfamily. Era GTPase family. In terms of assembly, monomer.

It is found in the cytoplasm. It localises to the cell membrane. Functionally, an essential GTPase that binds both GDP and GTP, with rapid nucleotide exchange. Plays a role in 16S rRNA processing and 30S ribosomal subunit biogenesis and possibly also in cell cycle regulation and energy metabolism. In Clostridium botulinum (strain Langeland / NCTC 10281 / Type F), this protein is GTPase Era.